The primary structure comprises 145 residues: D-aminoacyl-tRNA deacylase (145 aa).

A Gly-cisPro motif, important for rejection of L-amino acids motif is present at residues 137 to 138 (GP).

It belongs to the DTD family. In terms of assembly, homodimer.

It is found in the cytoplasm. The enzyme catalyses glycyl-tRNA(Ala) + H2O = tRNA(Ala) + glycine + H(+). It catalyses the reaction a D-aminoacyl-tRNA + H2O = a tRNA + a D-alpha-amino acid + H(+). Its function is as follows. An aminoacyl-tRNA editing enzyme that deacylates mischarged D-aminoacyl-tRNAs. Also deacylates mischarged glycyl-tRNA(Ala), protecting cells against glycine mischarging by AlaRS. Acts via tRNA-based rather than protein-based catalysis; rejects L-amino acids rather than detecting D-amino acids in the active site. By recycling D-aminoacyl-tRNA to D-amino acids and free tRNA molecules, this enzyme counteracts the toxicity associated with the formation of D-aminoacyl-tRNA entities in vivo and helps enforce protein L-homochirality. The polypeptide is D-aminoacyl-tRNA deacylase (Salmonella typhi).